Here is a 341-residue protein sequence, read N- to C-terminus: 5-formaminoimidazole-4-carboxamide-1-(beta)-D-ribofuranosyl 5'-monophosphate synthetase (341 aa).

Histidine 27 and serine 92 together coordinate 5-amino-1-(5-phospho-beta-D-ribosyl)imidazole-4-carboxamide. One can recognise an ATP-grasp domain in the interval 113–328 (RELLRWEADQ…MGERIAHEIK (216 aa)). ATP-binding positions include 143–195 (AEEV…VPAY) and glutamate 217. Asparagine 237 lines the 5-amino-1-(5-phospho-beta-D-ribosyl)imidazole-4-carboxamide pocket. Mg(2+)-binding residues include glutamate 276 and glutamate 289.

Belongs to the phosphohexose mutase family. Requires Mg(2+) as cofactor. Mn(2+) is required as a cofactor.

The catalysed reaction is 5-amino-1-(5-phospho-beta-D-ribosyl)imidazole-4-carboxamide + formate + ATP = 5-formamido-1-(5-phospho-D-ribosyl)imidazole-4-carboxamide + ADP + phosphate. The protein operates within purine metabolism; IMP biosynthesis via de novo pathway; 5-formamido-1-(5-phospho-D-ribosyl)imidazole-4-carboxamide from 5-amino-1-(5-phospho-D-ribosyl)imidazole-4-carboxamide (formate route): step 1/1. In terms of biological role, catalyzes the ATP- and formate-dependent formylation of 5-aminoimidazole-4-carboxamide-1-beta-d-ribofuranosyl 5'-monophosphate (AICAR) to 5-formaminoimidazole-4-carboxamide-1-beta-d-ribofuranosyl 5'-monophosphate (FAICAR) in the absence of folates. This is 5-formaminoimidazole-4-carboxamide-1-(beta)-D-ribofuranosyl 5'-monophosphate synthetase from Pyrobaculum aerophilum (strain ATCC 51768 / DSM 7523 / JCM 9630 / CIP 104966 / NBRC 100827 / IM2).